A 526-amino-acid polypeptide reads, in one-letter code: PTS system alpha-glucoside-specific EIICB component (526 aa).

In terms of domain architecture, PTS EIIC type-1 spans 1–417; that stretch reads MLKHFQRLGG…YNVKTSGRED (417 aa). 12 helical membrane-spanning segments follow: residues 12–32, 59–79, 88–108, 132–152, 173–193, 200–220, 224–244, 274–294, 305–325, 330–350, 355–375, and 381–401; these read LFAP…TIIL, GWTV…IGLA, LAVL…LTFW, IKTL…TIYI, LVSA…CLVW, ISSL…LYTF, ILIP…GPAV, GGFA…ALAM, IVSG…ITEP, FLFI…TMAA, FGVV…WLPL, and GVMF…YLVF. Positions 447 to 526 constitute a PTS EIIB type-1 domain; the sequence is SGKAKAFLEA…ESFENLMEQN (80 aa). The active-site Phosphocysteine intermediate; for EIIB activity is the cysteine 469.

Its subcellular location is the cell membrane. Functionally, the phosphoenolpyruvate-dependent sugar phosphotransferase system (sugar PTS), a major carbohydrate active -transport system, catalyzes the phosphorylation of incoming sugar substrates concomitantly with their translocation across the cell membrane. This system is involved in alpha-glucoside transport. This Fusobacterium mortiferum protein is PTS system alpha-glucoside-specific EIICB component (malB).